The sequence spans 84 residues: Small ribosomal subunit protein bS20 (84 aa).

A compositionally biased stretch (basic residues) spans 62 to 72 (KNKARRLKSRA). Positions 62 to 84 (KNKARRLKSRAARWSNSATAASR) are disordered. Residues 75 to 84 (WSNSATAASR) show a composition bias toward polar residues.

It belongs to the bacterial ribosomal protein bS20 family.

Binds directly to 16S ribosomal RNA. This Mycoplasmoides gallisepticum (strain R(low / passage 15 / clone 2)) (Mycoplasma gallisepticum) protein is Small ribosomal subunit protein bS20.